The sequence spans 439 residues: tRNA modification GTPase MnmE (439 aa).

Positions 20, 78, and 116 each coordinate (6S)-5-formyl-5,6,7,8-tetrahydrofolate. One can recognise a TrmE-type G domain in the interval 211–364; it reads GIYVAILGEP…LLSAIQKKVE (154 aa). Residues 221 to 226, 240 to 246, and 265 to 268 contribute to the GTP site; these read NSGKST, SEYAGTT, and DTAG. Residues Ser225 and Thr246 each coordinate Mg(2+). (6S)-5-formyl-5,6,7,8-tetrahydrofolate is bound at residue Lys439.

Belongs to the TRAFAC class TrmE-Era-EngA-EngB-Septin-like GTPase superfamily. TrmE GTPase family. As to quaternary structure, homodimer. Heterotetramer of two MnmE and two MnmG subunits. K(+) serves as cofactor.

Its subcellular location is the cytoplasm. Its function is as follows. Exhibits a very high intrinsic GTPase hydrolysis rate. Involved in the addition of a carboxymethylaminomethyl (cmnm) group at the wobble position (U34) of certain tRNAs, forming tRNA-cmnm(5)s(2)U34. In Ehrlichia ruminantium (strain Gardel), this protein is tRNA modification GTPase MnmE.